The chain runs to 668 residues: UvrABC system protein B (668 aa).

Residues 31-188 (HGIEAGEKAQ…RKLVNIQFER (158 aa)) form the Helicase ATP-binding domain. 44-51 (GATGTGKT) is an ATP binding site. The Beta-hairpin signature appears at 97-120 (YYDYYQPEAYVPSSDTYIEKDSSI). A Helicase C-terminal domain is found at 435–601 (QMDDLVGEIN…TIIKPIRDLI (167 aa)). A UVR domain is found at 630-665 (EKLIARLEDEMRAAAKKLDFEQAASLRDTIMDMKTE).

The protein belongs to the UvrB family. As to quaternary structure, forms a heterotetramer with UvrA during the search for lesions. Interacts with UvrC in an incision complex.

It localises to the cytoplasm. The UvrABC repair system catalyzes the recognition and processing of DNA lesions. A damage recognition complex composed of 2 UvrA and 2 UvrB subunits scans DNA for abnormalities. Upon binding of the UvrA(2)B(2) complex to a putative damaged site, the DNA wraps around one UvrB monomer. DNA wrap is dependent on ATP binding by UvrB and probably causes local melting of the DNA helix, facilitating insertion of UvrB beta-hairpin between the DNA strands. Then UvrB probes one DNA strand for the presence of a lesion. If a lesion is found the UvrA subunits dissociate and the UvrB-DNA preincision complex is formed. This complex is subsequently bound by UvrC and the second UvrB is released. If no lesion is found, the DNA wraps around the other UvrB subunit that will check the other stand for damage. This Levilactobacillus brevis (strain ATCC 367 / BCRC 12310 / CIP 105137 / JCM 1170 / LMG 11437 / NCIMB 947 / NCTC 947) (Lactobacillus brevis) protein is UvrABC system protein B.